The following is a 348-amino-acid chain: NADH-ubiquinone oxidoreductase chain 2 (348 aa).

Helical transmembrane passes span Met1–Ala21, Phe60–Leu80, Thr96–Pro116, Asn149–Leu169, Ile177–Gln194, Thr198–Leu220, Ile238–Gly258, Asp273–Leu293, and Met328–Ile348.

Belongs to the complex I subunit 2 family.

It localises to the mitochondrion inner membrane. The enzyme catalyses a ubiquinone + NADH + 5 H(+)(in) = a ubiquinol + NAD(+) + 4 H(+)(out). Functionally, core subunit of the mitochondrial membrane respiratory chain NADH dehydrogenase (Complex I) that is believed to belong to the minimal assembly required for catalysis. Complex I functions in the transfer of electrons from NADH to the respiratory chain. The immediate electron acceptor for the enzyme is believed to be ubiquinone. This Tetraodon nigroviridis (Spotted green pufferfish) protein is NADH-ubiquinone oxidoreductase chain 2 (MT-ND2).